Reading from the N-terminus, the 205-residue chain is GTP cyclohydrolase-2 (205 aa).

49 to 53 (RLHSE) lines the GTP pocket. The Zn(2+) site is built by Cys54, Cys65, and Cys67. Residues Gln70, 92–94 (EGR), and Thr114 contribute to the GTP site. Asp126 functions as the Proton acceptor in the catalytic mechanism. Arg128 functions as the Nucleophile in the catalytic mechanism. Positions 149 and 154 each coordinate GTP.

The protein belongs to the GTP cyclohydrolase II family. It depends on Zn(2+) as a cofactor.

The catalysed reaction is GTP + 4 H2O = 2,5-diamino-6-hydroxy-4-(5-phosphoribosylamino)-pyrimidine + formate + 2 phosphate + 3 H(+). The protein operates within cofactor biosynthesis; riboflavin biosynthesis; 5-amino-6-(D-ribitylamino)uracil from GTP: step 1/4. Functionally, catalyzes the conversion of GTP to 2,5-diamino-6-ribosylamino-4(3H)-pyrimidinone 5'-phosphate (DARP), formate and pyrophosphate. The protein is GTP cyclohydrolase-2 of Pseudomonas paraeruginosa (strain DSM 24068 / PA7) (Pseudomonas aeruginosa (strain PA7)).